The sequence spans 421 residues: Enolase (421 aa).

Residue Gln-162 participates in (2R)-2-phosphoglycerate binding. Glu-204 serves as the catalytic Proton donor. The Mg(2+) site is built by Asp-241, Glu-284, and Asp-311. Positions 336, 365, 366, and 387 each coordinate (2R)-2-phosphoglycerate. Lys-336 functions as the Proton acceptor in the catalytic mechanism.

Belongs to the enolase family. The cofactor is Mg(2+).

It is found in the cytoplasm. The protein localises to the secreted. The protein resides in the cell surface. It carries out the reaction (2R)-2-phosphoglycerate = phosphoenolpyruvate + H2O. The protein operates within carbohydrate degradation; glycolysis; pyruvate from D-glyceraldehyde 3-phosphate: step 4/5. Catalyzes the reversible conversion of 2-phosphoglycerate (2-PG) into phosphoenolpyruvate (PEP). It is essential for the degradation of carbohydrates via glycolysis. This chain is Enolase, found in Nautilia profundicola (strain ATCC BAA-1463 / DSM 18972 / AmH).